The primary structure comprises 95 residues: MSVDLATVKRVAKLARIAVSEDEANRMVGELNGILGFVEQLSEVNVDGVEAMTSVTPMAMKKRADEVTDGNKAADIVANAPVTDHNFFLVPKVVE.

It belongs to the GatC family. Heterotrimer of A, B and C subunits.

It carries out the reaction L-glutamyl-tRNA(Gln) + L-glutamine + ATP + H2O = L-glutaminyl-tRNA(Gln) + L-glutamate + ADP + phosphate + H(+). The enzyme catalyses L-aspartyl-tRNA(Asn) + L-glutamine + ATP + H2O = L-asparaginyl-tRNA(Asn) + L-glutamate + ADP + phosphate + 2 H(+). Allows the formation of correctly charged Asn-tRNA(Asn) or Gln-tRNA(Gln) through the transamidation of misacylated Asp-tRNA(Asn) or Glu-tRNA(Gln) in organisms which lack either or both of asparaginyl-tRNA or glutaminyl-tRNA synthetases. The reaction takes place in the presence of glutamine and ATP through an activated phospho-Asp-tRNA(Asn) or phospho-Glu-tRNA(Gln). The chain is Aspartyl/glutamyl-tRNA(Asn/Gln) amidotransferase subunit C from Rhizobium etli (strain ATCC 51251 / DSM 11541 / JCM 21823 / NBRC 15573 / CFN 42).